The following is a 187-amino-acid chain: MPTGGFDINELKRRMQGATQSLKHELGGLRTGRAAASMLEPVQVEAYGSHMPLNQLATVSVPEPRLLSVQVWDRSMVKAVEKAIVDSNLGLSPATEGQVLRLRIPELNEERRKELVKVAHKYAEATRVAVRHVRRDGLDTLKKLEKNSEISEDDQERLAHEVQKATDATILEVDQLLAAKEKEILTV.

It belongs to the RRF family.

Its subcellular location is the cytoplasm. Responsible for the release of ribosomes from messenger RNA at the termination of protein biosynthesis. May increase the efficiency of translation by recycling ribosomes from one round of translation to another. The polypeptide is Ribosome-recycling factor (Rhodopseudomonas palustris (strain BisB18)).